Here is a 602-residue protein sequence, read N- to C-terminus: UvrABC system protein C (602 aa).

In terms of domain architecture, GIY-YIG spans E19 to I97. The UVR domain occupies S206–V241.

It belongs to the UvrC family. Interacts with UvrB in an incision complex.

It localises to the cytoplasm. In terms of biological role, the UvrABC repair system catalyzes the recognition and processing of DNA lesions. UvrC both incises the 5' and 3' sides of the lesion. The N-terminal half is responsible for the 3' incision and the C-terminal half is responsible for the 5' incision. The protein is UvrABC system protein C of Aromatoleum aromaticum (strain DSM 19018 / LMG 30748 / EbN1) (Azoarcus sp. (strain EbN1)).